A 450-amino-acid chain; its full sequence is MFGSKFKICKIEAYEVIDSRGFPTVAAKVYAKNGVFAKAMVPSGASTGEREAVELRDGDKERFNGKGVLKAVNNVNTIIAPKVVGMDCRQQTKIDELMISLDGTPNKAKLGANAILAVSLAVAKLAAMIEEKPLYKYIRQNIMGDSSDSWTMPVPMLNVINGGAHADNTIDFQEFMFMPVGAKSLKEAVRMASECFHSLQSILKSKKLDTNKGDEGGFAPNLKNADEALKLMVEAVEKAGYKPGVDADVAFALDPATSELFDADKKTYTFEKALKAKILTAKDAVKKSEDMVKYWDGLCKKYPIISIEDGLAENDWDGFQLMVKDLGSRVQIVGDDLFCTNPKIVKEGISKGVANSVLIKVNQIGTLTETIETIKAAHAAGWTCVVSHRSGETEDTTIADIAVGLSTGQIKTGSMSRSERIAKYNRLIEIENELGSKAHYPGKSTFKSIK.

Gln173 serves as a coordination point for (2R)-2-phosphoglycerate. The Proton donor role is filled by Glu215. 3 residues coordinate Mg(2+): Asp254, Glu308, and Asp335. The (2R)-2-phosphoglycerate site is built by Lys360, Arg389, Ser390, and Lys411. Residue Lys360 is the Proton acceptor of the active site.

The protein belongs to the enolase family. Mg(2+) is required as a cofactor.

The protein localises to the cytoplasm. The protein resides in the secreted. It is found in the cell surface. The enzyme catalyses (2R)-2-phosphoglycerate = phosphoenolpyruvate + H2O. Its pathway is carbohydrate degradation; glycolysis; pyruvate from D-glyceraldehyde 3-phosphate: step 4/5. In terms of biological role, catalyzes the reversible conversion of 2-phosphoglycerate (2-PG) into phosphoenolpyruvate (PEP). It is essential for the degradation of carbohydrates via glycolysis. This Malacoplasma penetrans (strain HF-2) (Mycoplasma penetrans) protein is Enolase.